The chain runs to 189 residues: Elongation factor P (189 aa).

The protein belongs to the elongation factor P family.

It is found in the cytoplasm. The protein operates within protein biosynthesis; polypeptide chain elongation. Its function is as follows. Involved in peptide bond synthesis. Stimulates efficient translation and peptide-bond synthesis on native or reconstituted 70S ribosomes in vitro. Probably functions indirectly by altering the affinity of the ribosome for aminoacyl-tRNA, thus increasing their reactivity as acceptors for peptidyl transferase. The sequence is that of Elongation factor P from Orientia tsutsugamushi (strain Boryong) (Rickettsia tsutsugamushi).